The chain runs to 702 residues: Kinesin-like protein KIF3A (702 aa).

Positions 14-345 (NVKVVVRCRP…LRYANRAKNI (332 aa)) constitute a Kinesin motor domain. Residue 100-107 (GQTGTGKT) participates in ATP binding. Positions 355–593 (PKDALLRQFQ…LSRELRLQML (239 aa)) form a coiled coil. 2 disordered regions span residues 372–424 (KKLE…KMIE) and 667–702 (LMKL…SLLQ). Residues 376 to 400 (EGEEISGSDISGSEEDDDEEGEIGE) show a composition bias toward acidic residues. A compositionally biased stretch (basic and acidic residues) spans 410-424 (DQAGKKKVSPDKMIE). A globular region spans residues 600-702 (PRDYQEMIEN…PETVIDSLLQ (103 aa)). A compositionally biased stretch (basic residues) spans 675–690 (TSKGKARPKTGRRKRS). Residue serine 690 is modified to Phosphoserine.

It belongs to the TRAFAC class myosin-kinesin ATPase superfamily. Kinesin family. Kinesin II subfamily. In terms of assembly, heterodimer of KIF3A and KIF3B. Interacts with CIMAP3. Interacts with CLN3. Interacts with DCTN1. Interacts with FLCN. Interacts with AP3B1.

It localises to the cytoplasm. The protein resides in the cytoskeleton. The protein localises to the cell projection. Its subcellular location is the cilium. It is found in the microtubule organizing center. It localises to the centrosome. The protein resides in the centriole. Its function is as follows. Microtubule-based anterograde translocator for membranous organelles. Plus end-directed microtubule sliding activity in vitro. Plays a role in primary cilia formation. Plays a role in centriole cohesion and subdistal appendage organization and function. Regulates the formation of the subdistal appendage via recruitment of DCTN1 to the centriole. Also required for ciliary basal feet formation and microtubule anchoring to mother centriole. The sequence is that of Kinesin-like protein KIF3A (KIF3A) from Pongo abelii (Sumatran orangutan).